Consider the following 1117-residue polypeptide: Endogenous retrovirus group K member 9 Pol protein (1117 aa).

G2 is lipidated: N-myristoyl glycine. Positions 58-195 constitute a Reverse transcriptase domain; that stretch reads KDWKRIGKEL…AGQVPVTLQP (138 aa). A disordered region spans residues 165–264; sequence GKGPELVGPS…APPSRQGSEL (100 aa). Residues 232–247 show a composition bias toward pro residues; that stretch reads GMPPAPQGRAPYPQPP. 2 consecutive CCHC-type zinc fingers follow at residues 544–561 and 580–597; these read GKCY…NCPV and DLCP…QCRS. The disordered stretch occupies residues 598-629; sequence KFDKNGQPLSGNEQRGQPQAPQQTGAFPIQPF. Positions 604-622 are enriched in polar residues; it reads QPLSGNEQRGQPQAPQQTG. Residues 800-875 enclose the Peptidase A2 domain; the sequence is FEGLVDTGAD…IPLNLWGRDL (76 aa). D805 is a catalytic residue. The 47-residue stretch at 890-936 folds into the G-patch domain; it reads YSPTSQKIMTKRGYIPGKGLGKNEDGIKIPFEAKINQKREGIGYPFL.

This sequence belongs to the beta type-B retroviral polymerase family. HERV class-II K(HML-2) pol subfamily. Myristoylation is essential for retroviral assembly. Alteration of the glycine residue leads to a block in the budding of particles and an accumulation of Gag inside the cell. In terms of processing, specific enzymatic cleavages may yield mature proteins.

It is found in the cell membrane. The catalysed reaction is Processing at the authentic HIV-1 PR recognition site and release of the mature p17 matrix and the p24 capsid protein, as a result of the cleavage of the -SQNY-|-PIVQ- cleavage site.. The enzyme catalyses DNA(n) + a 2'-deoxyribonucleoside 5'-triphosphate = DNA(n+1) + diphosphate. It catalyses the reaction Endonucleolytic cleavage to 5'-phosphomonoester.. Its function is as follows. The products of the Gag polyproteins of infectious retroviruses perform highly complex orchestrated tasks during the assembly, budding, maturation, and infection stages of the viral replication cycle. During viral assembly, the proteins form membrane associations and self-associations that ultimately result in budding of an immature virion from the infected cell. Gag precursors also function during viral assembly to selectively bind and package two plus strands of genomic RNA. Endogenous Gag proteins may have kept, lost or modified their original function during evolution. In terms of biological role, early post-infection, the reverse transcriptase converts the viral RNA genome into double-stranded viral DNA. The RNase H domain of the reverse transcriptase performs two functions. It degrades the RNA template and specifically removes the RNA primer from the RNA/DNA hybrid. Following nuclear import, the integrase catalyzes the insertion of the linear, double-stranded viral DNA into the host cell chromosome. Endogenous Pol proteins may have kept, lost or modified their original function during evolution. This chain is Endogenous retrovirus group K member 9 Pol protein (ERVK-9), found in Homo sapiens (Human).